Here is a 363-residue protein sequence, read N- to C-terminus: UDP-N-acetylglucosamine--N-acetylmuramyl-(pentapeptide) pyrophosphoryl-undecaprenol N-acetylglucosamine transferase (363 aa).

UDP-N-acetyl-alpha-D-glucosamine is bound by residues 7–9 (TGG), asparagine 125, serine 196, isoleucine 251, and glutamine 296.

The protein belongs to the glycosyltransferase 28 family. MurG subfamily.

The protein resides in the cell membrane. The catalysed reaction is Mur2Ac(oyl-L-Ala-gamma-D-Glu-L-Lys-D-Ala-D-Ala)-di-trans,octa-cis-undecaprenyl diphosphate + UDP-N-acetyl-alpha-D-glucosamine = beta-D-GlcNAc-(1-&gt;4)-Mur2Ac(oyl-L-Ala-gamma-D-Glu-L-Lys-D-Ala-D-Ala)-di-trans,octa-cis-undecaprenyl diphosphate + UDP + H(+). Its pathway is cell wall biogenesis; peptidoglycan biosynthesis. Functionally, cell wall formation. Catalyzes the transfer of a GlcNAc subunit on undecaprenyl-pyrophosphoryl-MurNAc-pentapeptide (lipid intermediate I) to form undecaprenyl-pyrophosphoryl-MurNAc-(pentapeptide)GlcNAc (lipid intermediate II). This Latilactobacillus sakei subsp. sakei (strain 23K) (Lactobacillus sakei subsp. sakei) protein is UDP-N-acetylglucosamine--N-acetylmuramyl-(pentapeptide) pyrophosphoryl-undecaprenol N-acetylglucosamine transferase.